Here is a 183-residue protein sequence, read N- to C-terminus: Peptide methionine sulfoxide reductase MsrA 1 (183 aa).

Cys-12 is an active-site residue.

This sequence belongs to the MsrA Met sulfoxide reductase family.

It carries out the reaction L-methionyl-[protein] + [thioredoxin]-disulfide + H2O = L-methionyl-(S)-S-oxide-[protein] + [thioredoxin]-dithiol. The enzyme catalyses [thioredoxin]-disulfide + L-methionine + H2O = L-methionine (S)-S-oxide + [thioredoxin]-dithiol. Its function is as follows. Has an important function as a repair enzyme for proteins that have been inactivated by oxidation. Catalyzes the reversible oxidation-reduction of methionine sulfoxide in proteins to methionine. The sequence is that of Peptide methionine sulfoxide reductase MsrA 1 (msrA1) from Lactococcus lactis subsp. lactis (strain IL1403) (Streptococcus lactis).